A 747-amino-acid polypeptide reads, in one-letter code: Fibroblast growth factor receptor (747 aa).

Positions 1–24 are cleaved as a signal peptide; it reads MIQLQNTFIFIALTIFTSASTTSL. The Extracellular portion of the chain corresponds to 25–288; the sequence is KNETKPLNTI…TEEIPQDTHY (264 aa). N-linked (GlcNAc...) asparagine glycosylation is found at N26, N42, and N63. The tract at residues 47–68 is disordered; the sequence is EEDLFDTNGAPKSDTVNASTTT. Ig-like C2-type domains follow at residues 74 to 167 and 175 to 267; these read PRWV…YELD and PPVL…AWLT. A disulfide bridge links C99 with C151. N-linked (GlcNAc...) asparagine glycosylation is found at N161, N185, N217, N227, and N240. Cysteines 198 and 251 form a disulfide. The chain crosses the membrane as a helical span at residues 289 to 309; the sequence is LIYIFGVVCFIILLAFIVYMC. At 310–747 the chain is on the cytoplasmic side; sequence NSRYQNKDPP…NGHARMQSDV (438 aa). Residues 377–660 form the Protein kinase domain; sequence ILLHERIDEG…QLVEDLDRML (284 aa). ATP contacts are provided by residues 383–391 and K412; that span reads IDEGFFGQV. D525 (proton acceptor) is an active-site residue. Y556 carries the post-translational modification Phosphotyrosine; by autocatalysis. A disordered region spans residues 679–731; it reads YLPSDVDSNEDTESRDSANATGEDSDSVFEPIDGHGAHAYEVDEAGPLLNPQP. The span at 710–719 shows a compositional bias: basic and acidic residues; sequence IDGHGAHAYE.

Belongs to the protein kinase superfamily. Tyr protein kinase family. Fibroblast growth factor receptor subfamily.

The protein resides in the membrane. It carries out the reaction L-tyrosyl-[protein] + ATP = O-phospho-L-tyrosyl-[protein] + ADP + H(+). Its function is as follows. Receptor for basic fibroblast growth factor. The chain is Fibroblast growth factor receptor (FGFR) from Ciona intestinalis (Transparent sea squirt).